The primary structure comprises 163 residues: Nucleotide-binding protein YajQ (163 aa).

The protein belongs to the YajQ family.

Its function is as follows. Nucleotide-binding protein. The polypeptide is Nucleotide-binding protein YajQ (Shigella dysenteriae serotype 1 (strain Sd197)).